Here is a 248-residue protein sequence, read N- to C-terminus: Homeotic protein ultrabithorax (248 aa).

The segment covering 116-125 has biased composition (gly residues); that stretch reads GTGGGGGGSA. Positions 116 to 191 are disordered; the sequence is GTGGGGGGSA…GSAGVVGGAG (76 aa). Residues 126 to 139 show a composition bias toward low complexity; it reads GSANGANNTANGQN. 2 stretches are compositionally biased toward gly residues: residues 140–152 and 182–191; these read TSGG…GGGM and GSAGVVGGAG. The Antp-type hexapeptide signature appears at 241-246; that stretch reads FYPWMA.

This sequence belongs to the Antp homeobox family.

The protein resides in the nucleus. Its function is as follows. Sequence-specific transcription factor which is part of a developmental regulatory system that provides cells with specific positional identities on the anterior-posterior axis. Binds the consensus region 5'-TTAAT[GT][GA]-3'. The sequence is that of Homeotic protein ultrabithorax (Ubx) from Musca domestica (House fly).